The chain runs to 150 residues: uncharacterized protein (150 aa).

The N-acetyltransferase domain occupies 4–149 (IQIRNYQPGD…TNFYMRYKPQ (146 aa)).

The protein belongs to the acetyltransferase family.

This is an uncharacterized protein from Escherichia coli (strain K12).